Reading from the N-terminus, the 587-residue chain is MKRSMYAGRVREEHIGQEITLKGWVGRRRDLGGLIFIDLRDREGIMQLVINPEKVSAEVMATAESLRSEFVIEVTGQVAAREQANDKLPTGAVELNVTALIVLNTAKTTPFEIKDGIEANDDTRLRYRYLDLRRPEMLENLKLRAKVTHSIRNYLDELEFIDVETPFLSKSTPEGARDYLVPSRVNKGHFYALPQSPQITKQLLMNAGFDRYYQIVKCFRDEDLRGDRQPEFTQVDLETSFLTEQEIQDITEGLIARVMKETKGIEVTLPFPRMKYDDAMALYGSDKPDTRFDMLLQDLTEVVKGVDFKVFSEAPAVKAIVVKGAADNYSRKDIDKMTEVAKQYGAKGLAWVKVVDGELNGPVAKFLTGIQEELTTALALEDKDLVLFVADTLEVANATLGALRGRIAKELGLIDNDKFNFLWVVDWPMFEWSEEEGRYMSAHHPFTLPQEETAHELEGDLAKVRAIAYDIVLNGYELGGGSLRINQKDLQERMFKALGFSTEEANDQFGFLLEAMDYGFPPHGGLAIGLDRFVMLLAGEENIREVIAFPKNNKATDPMTQAPSTVALKQLEELSLQVEEDETNKTN.

Position 174 (Glu174) interacts with L-aspartate. The aspartate stretch occupies residues 198–201 (QITK). Arg220 contributes to the L-aspartate binding site. Residues 220 to 222 (RDE) and Gln229 each bind ATP. His443 provides a ligand contact to L-aspartate. An ATP-binding site is contributed by Glu477. Position 484 (Arg484) interacts with L-aspartate. 529–532 (GLDR) is an ATP binding site.

It belongs to the class-II aminoacyl-tRNA synthetase family. Type 1 subfamily. In terms of assembly, homodimer.

It is found in the cytoplasm. It carries out the reaction tRNA(Asp) + L-aspartate + ATP = L-aspartyl-tRNA(Asp) + AMP + diphosphate. Catalyzes the attachment of L-aspartate to tRNA(Asp) in a two-step reaction: L-aspartate is first activated by ATP to form Asp-AMP and then transferred to the acceptor end of tRNA(Asp). The protein is Aspartate--tRNA ligase of Streptococcus pneumoniae (strain ATCC 700669 / Spain 23F-1).